The following is a 456-amino-acid chain: Vitamin K-dependent protein C (456 aa).

The first 20 residues, 1-20, serve as a signal peptide directing secretion; sequence MWQLASLSLLLTICGTCSTA. Positions 21–42 are excised as a propeptide; sequence APPGSVFSSSESAHQVLRIRKR. Residues 47-88 form the Gla domain; sequence LEEIRAGSLERECMEEICDFEEAKEIFQNVDDTLAYWSKYVD. 4-carboxyglutamate is present on residues E48, E49, E56, E58, E61, E62, E67, E68, and E71. A disulfide bridge connects residues C59 and C64. Cystine bridges form between C92–C111, C101–C106, C105–C120, and C122–C131. EGF-like domains are found at residues 97 to 132 and 136 to 176; these read PEHACDSPCCGHGSCIDGIGAFHCDCGRGWEGRFCQ and SYIN…LQCQ. At D113 the chain carries (3R)-3-hydroxyaspartate. N-linked (GlcNAc...) asparagine glycosylation is present at N139. Disulfide bonds link C140–C151, C147–C160, C162–C175, C183–C318, and C237–C253. N202 carries N-linked (GlcNAc...) asparagine glycosylation. A Peptidase S1 domain is found at 211–445; the sequence is LVNGKVTRRG…YLDWIHSHIR (235 aa). H252 (charge relay system) is an active-site residue. The N-linked (GlcNAc...) asparagine glycan is linked to N289. Catalysis depends on D298, which acts as the Charge relay system. The N-linked (GlcNAc...) asparagine glycan is linked to N350. Intrachain disulfides connect C368-C382 and C393-C421. Catalysis depends on S397, which acts as the Charge relay system.

The protein belongs to the peptidase S1 family. In terms of assembly, synthesized as a single chain precursor, which is cleaved into a light chain and a heavy chain held together by a disulfide bond. The enzyme is then activated by thrombin, which cleaves a tetradecapeptide from the amino end of the heavy chain; this reaction, which occurs at the surface of endothelial cells, is strongly promoted by thrombomodulin. In terms of processing, the vitamin K-dependent, enzymatic carboxylation of some Glu residues allows the modified protein to bind calcium. The iron and 2-oxoglutarate dependent 3-hydroxylation of aspartate and asparagine is (R) stereospecific within EGF domains. In terms of tissue distribution, plasma; synthesized in the liver.

It localises to the secreted. Its subcellular location is the golgi apparatus. The protein resides in the endoplasmic reticulum. The catalysed reaction is Degradation of blood coagulation factors Va and VIIIa.. Protein C is a vitamin K-dependent serine protease that regulates blood coagulation by inactivating factors Va and VIIIa in the presence of calcium ions and phospholipids. Exerts a protective effect on the endothelial cell barrier function. In Canis lupus familiaris (Dog), this protein is Vitamin K-dependent protein C (PROC).